Here is a 142-residue protein sequence, read N- to C-terminus: Relaxin-3 (142 aa).

Residues 1–25 form the signal peptide; the sequence is MARYKLLLLLAVWVLTGELWPGAEA. 3 disulfides stabilise this stretch: C35/C129, C47/C142, and C128/C133. A propeptide spans 55-118 (connecting peptide); the sequence is SDILAHEAMG…GTPGALRGSR (64 aa).

The protein belongs to the insulin family. As to quaternary structure, heterodimer of a B chain and an A chain linked by two disulfide bonds.

The protein resides in the secreted. May play a role in neuropeptide signaling processes. Ligand for LGR7, RXFP3 and RXFP4. This is Relaxin-3 (RLN3) from Pan troglodytes (Chimpanzee).